The primary structure comprises 387 residues: S-adenosylmethionine synthase (387 aa).

Histidine 19 serves as a coordination point for ATP. Residue aspartate 21 coordinates Mg(2+). Glutamate 47 is a K(+) binding site. Glutamine 103 is an L-methionine binding site. The segment at 103 to 113 (QSPDIAQGVEL) is flexible loop. ATP-binding positions include 167 to 169 (DMK), 233 to 234 (RF), aspartate 242, 248 to 249 (RK), alanine 265, and lysine 269. Position 242 (aspartate 242) interacts with L-methionine. An L-methionine-binding site is contributed by lysine 273.

Belongs to the AdoMet synthase family. In terms of assembly, homotetramer; dimer of dimers. Mg(2+) serves as cofactor. K(+) is required as a cofactor.

It localises to the cytoplasm. It catalyses the reaction L-methionine + ATP + H2O = S-adenosyl-L-methionine + phosphate + diphosphate. The protein operates within amino-acid biosynthesis; S-adenosyl-L-methionine biosynthesis; S-adenosyl-L-methionine from L-methionine: step 1/1. Functionally, catalyzes the formation of S-adenosylmethionine (AdoMet) from methionine and ATP. The overall synthetic reaction is composed of two sequential steps, AdoMet formation and the subsequent tripolyphosphate hydrolysis which occurs prior to release of AdoMet from the enzyme. This is S-adenosylmethionine synthase from Mycoplasma capricolum subsp. capricolum (strain California kid / ATCC 27343 / NCTC 10154).